The primary structure comprises 464 residues: Argininosuccinate lyase (464 aa).

This sequence belongs to the lyase 1 family. Argininosuccinate lyase subfamily.

Its subcellular location is the cytoplasm. It carries out the reaction 2-(N(omega)-L-arginino)succinate = fumarate + L-arginine. It functions in the pathway amino-acid biosynthesis; L-arginine biosynthesis; L-arginine from L-ornithine and carbamoyl phosphate: step 3/3. The protein is Argininosuccinate lyase of Moorella thermoacetica (strain ATCC 39073 / JCM 9320).